Here is a 347-residue protein sequence, read N- to C-terminus: Quinolinate synthase (347 aa).

The iminosuccinate site is built by His-47 and Ser-68. Cys-113 contributes to the [4Fe-4S] cluster binding site. Iminosuccinate-binding positions include 139–141 and Ser-156; that span reads YAN. Cys-200 is a binding site for [4Fe-4S] cluster. Iminosuccinate contacts are provided by residues 226-228 and Thr-243; that span reads HPE. Cys-297 contributes to the [4Fe-4S] cluster binding site.

This sequence belongs to the quinolinate synthase family. Type 1 subfamily. Requires [4Fe-4S] cluster as cofactor.

The protein localises to the cytoplasm. The catalysed reaction is iminosuccinate + dihydroxyacetone phosphate = quinolinate + phosphate + 2 H2O + H(+). The protein operates within cofactor biosynthesis; NAD(+) biosynthesis; quinolinate from iminoaspartate: step 1/1. Functionally, catalyzes the condensation of iminoaspartate with dihydroxyacetone phosphate to form quinolinate. The polypeptide is Quinolinate synthase (Enterobacter sp. (strain 638)).